Reading from the N-terminus, the 407-residue chain is D-galactonate dehydratase family member Pjdr2_1176 (407 aa).

Residue Asp-208 participates in Mg(2+) binding. Residue His-210 participates in D-arabinonate binding. Residues Glu-234 and Glu-260 each coordinate Mg(2+). 3 residues coordinate D-arabinonate: Glu-260, Arg-281, and Glu-337.

Belongs to the mandelate racemase/muconate lactonizing enzyme family. GalD subfamily.

Has no detectable activity with D-mannonate and with a panel of 70 other acid sugars (in vitro), in spite of the conservation of the residues that are expected to be important for catalytic activity and cofactor binding. May have evolved a divergent function. This chain is D-galactonate dehydratase family member Pjdr2_1176, found in Paenibacillus sp. (strain JDR-2).